We begin with the raw amino-acid sequence, 367 residues long: Endopolygalacturonase B (367 aa).

Residues 1 to 17 form the signal peptide; the sequence is MHFQLLGLAALGSLAAA. Residues 18-30 constitute a propeptide that is removed on maturation; that stretch reads APAPSRTSELVER. Cysteines 34 and 49 form a disulfide. PbH1 repeat units follow at residues 161 to 191, 192 to 213, 214 to 234, 243 to 264, and 272 to 294; these read GNDV…DVSE, SNGV…AINS, GENI…SIGS, VKNV…RIKT, and VSGV…VIEQ. Asp206 (proton donor) is an active-site residue. Cys208 and Cys224 are joined by a disulfide. Residue His228 is part of the active site. Asn279 carries an N-linked (GlcNAc...) asparagine glycan. 2 disulfides stabilise this stretch: Cys334-Cys339 and Cys358-Cys367.

This sequence belongs to the glycosyl hydrolase 28 family.

Its subcellular location is the secreted. The enzyme catalyses (1,4-alpha-D-galacturonosyl)n+m + H2O = (1,4-alpha-D-galacturonosyl)n + (1,4-alpha-D-galacturonosyl)m.. In terms of biological role, involved in maceration and soft-rotting of plant tissue. Hydrolyzes the 1,4-alpha glycosidic bonds of de-esterified pectate in the smooth region of the plant cell wall. This chain is Endopolygalacturonase B (pgaB), found in Aspergillus flavus (strain ATCC MYA-384 / AF70).